Here is a 312-residue protein sequence, read N- to C-terminus: Short chain dehydrogenase pgmD (312 aa).

NADP(+) contacts are provided by Val46, Ile47, Lys171, Tyr207, Lys211, and Thr242. Residue Tyr207 is the Proton donor of the active site. Lys211 serves as the catalytic Lowers pKa of active site Tyr.

Belongs to the short-chain dehydrogenases/reductases (SDR) family.

Its pathway is pigment biosynthesis. The protein operates within secondary metabolite biosynthesis. Functionally, short chain dehydrogenase; part of the gene cluster that mediates the biosynthesis of pleosporalin A, ascomycone A, as well as a third cryptic naphthoquinone derived pigment, all responsible for the coloration of conidia. Essential for the production of pleosporalin A, but not the 2 other final products. The pathway begins with the biosynthesis of the cyclized heptaketide 3-acetonyl-1,6,8-trihydroxy-2-naphthaldehyde by the NR-PKS pgmA. The C-6 hydroxyl group is further methylated by the O-methyltransferase pgmB to yield fusarubinaldehyde which is in turn oxidized by the cytochrome P450 monooxygenase pgmC at C-9. The C-1 hydroxyl group is then methylated spontaneously. Although pgmE, pgmD and pgmH are essential for the production of pleosporalin A, it is not the case for the 2 other final products and it remains difficult to assign a specific function to each enzyme. PgmF and pgmG seem not to be involved in pigment biosynthesis although they were regulated by the cluster-specific transcription factor pgmR. The chain is Short chain dehydrogenase pgmD from Aspergillus terreus (strain NIH 2624 / FGSC A1156).